A 316-amino-acid polypeptide reads, in one-letter code: Neutrophil-stimulating factor 1 (316 aa).

The N-terminal stretch at 1–21 (METSLPITVVFLIVLITGAQT) is a signal peptide. The segment at 126-316 (HGEMLERMTA…WFAVSWNDRG (191 aa)) is involved in interaction with human CD47. Residue asparagine 169 is glycosylated (N-linked (GlcNAc...) asparagine).

Interacts with human CD4. Interacts with human CD47; the interaction results in inhibition of phagocytosis activity of host macrophages. As to expression, female salivary gland (at protein level). Saliva (at protein level). Some expression in ovary and midgut (at protein level).

It localises to the secreted. In terms of biological role, activates host neutrophils; induces expression of IL1B and CXCL2 at the bite site. Promotes activation of human CD4(+) T-cells. Inhibits phagocytosis activity of host macrophages via the interaction with CD47 receptor on their surface. Suppresses expression of pro-inflammatory cytokines, such as IFN-gamma/IFNG, IL2, TNF-alpha/TNF, IL12B, IL8/CXCL8, IL6, in host white blood cells. Reduces host polymorphonuclear neutrophil chemotaxis induced by N-formylmethionine-leucylphenylalanine (fMLF). Reduces CD11b/ITGAM expression in fMLF-induced host polymorphonuclear neutrophils. Functionally, (Microbial infection) Enhances early replication of Zika virus in the host. This Aedes aegypti (Yellowfever mosquito) protein is Neutrophil-stimulating factor 1.